The sequence spans 274 residues: 2,3,4,5-tetrahydropyridine-2,6-dicarboxylate N-succinyltransferase (274 aa).

2 residues coordinate substrate: Arg-104 and Asp-141.

Belongs to the transferase hexapeptide repeat family. As to quaternary structure, homotrimer.

Its subcellular location is the cytoplasm. The enzyme catalyses (S)-2,3,4,5-tetrahydrodipicolinate + succinyl-CoA + H2O = (S)-2-succinylamino-6-oxoheptanedioate + CoA. The protein operates within amino-acid biosynthesis; L-lysine biosynthesis via DAP pathway; LL-2,6-diaminopimelate from (S)-tetrahydrodipicolinate (succinylase route): step 1/3. This chain is 2,3,4,5-tetrahydropyridine-2,6-dicarboxylate N-succinyltransferase, found in Citrobacter koseri (strain ATCC BAA-895 / CDC 4225-83 / SGSC4696).